Here is a 151-residue protein sequence, read N- to C-terminus: Probable cellulase Cel12b (151 aa).

Active-site residues include E50 and E133.

It belongs to the glycosyl hydrolase 12 (cellulase H) family.

In terms of biological role, probable cellulase. Can hydrolyze barley beta-glucan in vitro. Could be important for the survival of M.tuberculosis in the environment, perhaps in amoebal hosts. The protein is Probable cellulase Cel12b of Mycobacterium tuberculosis (strain ATCC 25618 / H37Rv).